The chain runs to 306 residues: Homoserine O-acetyltransferase (306 aa).

The Acyl-thioester intermediate role is filled by Cys142. The substrate site is built by Lys163 and Ser192. Residue His235 is the Proton acceptor of the active site. Residue Glu237 is part of the active site. Position 249 (Arg249) interacts with substrate.

The protein belongs to the MetA family.

Its subcellular location is the cytoplasm. The catalysed reaction is L-homoserine + acetyl-CoA = O-acetyl-L-homoserine + CoA. It functions in the pathway amino-acid biosynthesis; L-methionine biosynthesis via de novo pathway; O-acetyl-L-homoserine from L-homoserine: step 1/1. In terms of biological role, transfers an acetyl group from acetyl-CoA to L-homoserine, forming acetyl-L-homoserine. This is Homoserine O-acetyltransferase from Brucella abortus (strain S19).